The following is an 850-amino-acid chain: Mitochondrial escape protein 2 (850 aa).

A mitochondrion-targeting transit peptide spans 1-44 (MLLVRTTSLNVSRMPVPCLARGIGILKGKYRLANLMNAQPSVRH). Positions 44–66 (HVSSEIQQKDQQAGESNTATDTG) are disordered. The Mitochondrial matrix segment spans residues 45-287 (VSSEIQQKDQ…VSNFFTNHTR (243 aa)). A compositionally biased stretch (polar residues) spans 47–64 (SEIQQKDQQAGESNTATD). The RRM domain maps to 198–272 (TTIVIKFQGP…TVLHIQYENI (75 aa)). A helical transmembrane segment spans residues 288-308 (IAIPVLFALLSIFAVLVFDPI). Residues 309–850 (REFSIEQKIT…CEEEIKNLSK (542 aa)) are Mitochondrial intermembrane-facing. The segment covering 607–621 (KGENVKEPESEKEIA) has biased composition (basic and acidic residues). The interval 607–633 (KGENVKEPESEKEIAENNDSDSEADTS) is disordered.

It belongs to the YME2 family.

The protein localises to the mitochondrion inner membrane. Plays a role in maintaining the mitochondrial genome and in controlling the mtDNA escape. Involved in the regulation of mtDNA nucleotide structure and number. May have a dispensable role in early maturation of pre-rRNA. In Saccharomyces cerevisiae (strain YJM789) (Baker's yeast), this protein is Mitochondrial escape protein 2 (YME2).